The chain runs to 626 residues: tRNA uridine 5-carboxymethylaminomethyl modification enzyme MnmG (626 aa).

13–18 (GGGHAG) provides a ligand contact to FAD. An NAD(+)-binding site is contributed by 273–287 (GPRYCPSIEDKIHRF).

The protein belongs to the MnmG family. Homodimer. Heterotetramer of two MnmE and two MnmG subunits. FAD is required as a cofactor.

The protein resides in the cytoplasm. Functionally, NAD-binding protein involved in the addition of a carboxymethylaminomethyl (cmnm) group at the wobble position (U34) of certain tRNAs, forming tRNA-cmnm(5)s(2)U34. This Acinetobacter baumannii (strain AB307-0294) protein is tRNA uridine 5-carboxymethylaminomethyl modification enzyme MnmG.